We begin with the raw amino-acid sequence, 112 residues long: Cytoplasmic envelopment protein 3 (112 aa).

A lipid anchor (N-myristoyl glycine; by host) is attached at G2. Residues 84 to 112 (GANKGGGKRTSSLKSAKNGAGVKKKVRAL) form a disordered region.

The protein belongs to the herpesviridae cytoplasmic envelopment protein 3 family. As to quaternary structure, interacts with cytoplasmic envelopment protein 2; this interaction is essential for the proper localization of each protein to the assembly complex and thus for the production of infectious virus. Post-translationally, myristoylation and palmitoylation (probably on one or more of the nearby cysteines at the N-terminus) enable membrane-binding and Golgi apparatus-specific targeting and are essential for efficient packaging. Phosphorylated. Phosphorylation does not seem to be required for recycling to the host Golgi apparatus. Packaging is selective for underphosphorylated forms.

Its subcellular location is the virion tegument. The protein resides in the virion membrane. The protein localises to the host cell membrane. It localises to the host Golgi apparatus membrane. In terms of biological role, plays an important role in the cytoplasmic envelopment of tegument proteins and capsids during the assembly and egress processes. Also participates in viral entry at the fusion step probably by regulating the core fusion machinery. The polypeptide is Cytoplasmic envelopment protein 3 (UL99) (Murid herpesvirus 1 (strain K181) (MuHV-1)).